We begin with the raw amino-acid sequence, 356 residues long: DNA integrity scanning protein DisA (356 aa).

Residues 7-147 (NKNMLYALKM…EKYVVEDISK (141 aa)) form the DAC domain. ATP contacts are provided by residues G74, L92, and 105–109 (TRHRT).

Belongs to the DisA family. In terms of assembly, homooctamer. The cofactor is Mg(2+).

The catalysed reaction is 2 ATP = 3',3'-c-di-AMP + 2 diphosphate. Functionally, participates in a DNA-damage check-point that is active prior to asymmetric division when DNA is damaged. DisA forms globular foci that rapidly scan along the chromosomes during sporulation, searching for lesions. When a lesion is present, DisA pauses at the lesion site. This triggers a cellular response that culminates in a temporary block in sporulation initiation. Also has diadenylate cyclase activity, catalyzing the condensation of 2 ATP molecules into cyclic di-AMP (c-di-AMP). c-di-AMP acts as a signaling molecule that couples DNA integrity with progression of sporulation. The rise in c-di-AMP level generated by DisA while scanning the chromosome, operates as a positive signal that advances sporulation; upon encountering a lesion, the DisA focus arrests at the damaged site and halts c-di-AMP synthesis. This chain is DNA integrity scanning protein DisA, found in Clostridioides difficile (strain 630) (Peptoclostridium difficile).